A 296-amino-acid polypeptide reads, in one-letter code: MTDFGRVITAMITPFTADGAIAYDVAAKLAQHLVANGSDGIVVCGTTGESPTLTWEEEFQLFQTVQQAVAGKAKIIAGTGSNSTREAIDATAKAAELGLDGALLVVPYYNKPPQEGLYAHFQAIAKAVPDFPLMLYNIPGRTGQNLLPETVIRLAEYPNIVAIKEASGSLDQASTLRAALPPTFRIYAGDDSLTLPLLAVGGYGVVSVASHLVGLRIQEMIQAFVQGDTAKATAIHCQLLPLFKALFVTTNPIPIKAALSLQGWSVGEPRLPLTSASDAVISQLKAVLDDLGLLKS.

A pyruvate-binding site is contributed by Thr47. The active-site Proton donor/acceptor is Tyr136. The active-site Schiff-base intermediate with substrate is Lys164. A pyruvate-binding site is contributed by Val206.

It belongs to the DapA family. In terms of assembly, homotetramer; dimer of dimers.

The protein localises to the cytoplasm. The enzyme catalyses L-aspartate 4-semialdehyde + pyruvate = (2S,4S)-4-hydroxy-2,3,4,5-tetrahydrodipicolinate + H2O + H(+). It participates in amino-acid biosynthesis; L-lysine biosynthesis via DAP pathway; (S)-tetrahydrodipicolinate from L-aspartate: step 3/4. Catalyzes the condensation of (S)-aspartate-beta-semialdehyde [(S)-ASA] and pyruvate to 4-hydroxy-tetrahydrodipicolinate (HTPA). This Thermosynechococcus vestitus (strain NIES-2133 / IAM M-273 / BP-1) protein is 4-hydroxy-tetrahydrodipicolinate synthase.